We begin with the raw amino-acid sequence, 321 residues long: NADPH-dependent codeinone reductase 1-2 (321 aa).

Residues Thr27 and Asp51 each coordinate NADPH. Active-site proton donor residues include Tyr56 and His119. Residue His119 participates in substrate binding. The NADPH site is built by Ser165, Gln187, Ser214, Leu216, Ser264, and Arg269. The tract at residues 299–321 (SADFLLSPTGPFKTEEEFWDEKD) is disordered.

This sequence belongs to the aldo/keto reductase family. In terms of tissue distribution, latex secreting cells (laticifer cells). Expressed constitutively in all organs with highest levels in capsules. Restricted to the parietal region of sieve elements adjacent or proximal to laticifers in roots, stems, leaves and carpels.

It is found in the cytoplasm. The protein resides in the cytosol. It carries out the reaction codeine + NADP(+) = codeinone + NADPH + H(+). It catalyses the reaction neopine + NADP(+) = neopinone + NADPH + H(+). The enzyme catalyses morphine + NADP(+) = morphinone + NADPH + H(+). The catalysed reaction is neomorphine + NADP(+) = neomorphinone + NADPH + H(+). The protein operates within alkaloid biosynthesis; morphine biosynthesis. Its function is as follows. NADPH-dependent codeinone reductase involved in biosynthesis of morphinan-type benzylisoquinoline and opiate alkaloids natural products. Reduces codeinone to codeine in the penultimate step in morphine biosynthesis. Can use morphinone, hydrocodone and hydromorphone as substrate during reductive reaction with NADPH as cofactor, and morphine and dihydrocodeine as substrate during oxidative reaction with NADP as cofactor. Converts morphinone to morphine, and neomorphinone to neomorphine. Reduces irreversibly neopinone, a spontaneous isomer of codeinone, to neopine; in planta, neopine levels are limited to low levels. The protein is NADPH-dependent codeinone reductase 1-2 of Papaver somniferum (Opium poppy).